The sequence spans 78 residues: Large ribosomal subunit protein bL28 (78 aa).

The disordered stretch occupies residues 1-20 (MSRVCQVTGKRPAVGNNRSH).

The protein belongs to the bacterial ribosomal protein bL28 family.

This is Large ribosomal subunit protein bL28 from Actinobacillus pleuropneumoniae serotype 7 (strain AP76).